The following is a 102-amino-acid chain: Large ribosomal subunit protein uL24 (102 aa).

The protein belongs to the universal ribosomal protein uL24 family. As to quaternary structure, part of the 50S ribosomal subunit.

One of two assembly initiator proteins, it binds directly to the 5'-end of the 23S rRNA, where it nucleates assembly of the 50S subunit. Its function is as follows. One of the proteins that surrounds the polypeptide exit tunnel on the outside of the subunit. The chain is Large ribosomal subunit protein uL24 from Agrobacterium fabrum (strain C58 / ATCC 33970) (Agrobacterium tumefaciens (strain C58)).